Consider the following 264-residue polypeptide: Claudin-18 (264 aa).

Residues 1-6 (MATTTC) lie on the Cytoplasmic side of the membrane. The chain crosses the membrane as a helical span at residues 7-27 (QVVGLLLSLLGLAGCIAATGM). At 28 to 80 (DMWSTQDLYDNPVTAVFQYEGLWRSCVQQSSGFTECRPYFTILGLPAMLQAVR) the chain is on the extracellular side. A helical membrane pass occupies residues 81-101 (ALMIVGIVLGVIGILVSIFAL). The Cytoplasmic segment spans residues 102-122 (KCIRIGSMDDSAKAKMTLTSG). Residues 123 to 143 (ILFIISGICAIIGVSVFANML) form a helical membrane-spanning segment. The Extracellular segment spans residues 144 to 176 (VTNFWMSTANMYSGMGGMGGMVQTVQTRYTFGA). A helical membrane pass occupies residues 177 to 197 (ALFVGWVAGGLTLIGGVMMCI). At 198 to 264 (ACRGLTPDDS…QSHPTKYDYV (67 aa)) the chain is on the cytoplasmic side. The required for role in regulation of RANKL-induced osteoclast differentiation stretch occupies residues 198–264 (ACRGLTPDDS…QSHPTKYDYV (67 aa)). Serine 217 is modified (phosphoserine). A disordered region spans residues 241-264 (KKIYDGGARTEDDEQSHPTKYDYV). Over residues 242 to 264 (KIYDGGARTEDDEQSHPTKYDYV) the composition is skewed to basic and acidic residues.

This sequence belongs to the claudin family. As to quaternary structure, interacts with TJP2/ZO-2. Interacts with TJP1/ZO-1. Interacts with YAP1 (phosphorylated); the interaction sequesters YAP1 away from the nucleus and thereby restricts transcription of YAP1 target genes. Interacts with CLDN19. Expressed in the lung (at protein level). In terms of tissue distribution, expressed in lung. Expressed in the stomach. As to expression, expressed in lung. Expressed in stomach. Expressed in bone. In terms of tissue distribution, expressed in stomach.

It localises to the cell junction. Its subcellular location is the tight junction. The protein resides in the cell membrane. It is found in the lateral cell membrane. Functionally, involved in alveolar fluid homeostasis via regulation of alveolar epithelial tight junction composition and therefore ion transport and solute permeability, potentially via downstream regulation of the actin cytoskeleton organization and beta-2-adrenergic signaling. Required for lung alveolarization and maintenance of the paracellular alveolar epithelial barrier. Acts to maintain epithelial progenitor cell proliferation and organ size, via regulation of YAP1 localization away from the nucleus and thereby restriction of YAP1 target gene transcription. Acts as a negative regulator of RANKL-induced osteoclast differentiation, potentially via relocation of TJP2/ZO-2 away from the nucleus, subsequently involved in bone resorption in response to calcium deficiency. Mediates the osteoprotective effects of estrogen, potentially via acting downstream of estrogen signaling independently of RANKL signaling pathways. Its function is as follows. Involved in the maintenance of homeostasis of the alveolar microenvironment via regulation of pH and subsequent T-cell activation in the alveolar space, is therefore indirectly involved in limiting C.neoformans infection. In terms of biological role, required for the formation of the gastric paracellular barrier via its role in tight junction formation, thereby involved in the response to gastric acidification. The chain is Claudin-18 (Cldn18) from Mus musculus (Mouse).